Reading from the N-terminus, the 364-residue chain is Phosphoserine aminotransferase (364 aa).

L-glutamate is bound at residue Arg-41. Residues 75-76 (AS), Trp-100, Thr-155, Asp-175, and Gln-198 each bind pyridoxal 5'-phosphate. At Lys-199 the chain carries N6-(pyridoxal phosphate)lysine. 239 to 240 (NT) lines the pyridoxal 5'-phosphate pocket.

It belongs to the class-V pyridoxal-phosphate-dependent aminotransferase family. SerC subfamily. As to quaternary structure, homodimer. Requires pyridoxal 5'-phosphate as cofactor.

The protein localises to the cytoplasm. It catalyses the reaction O-phospho-L-serine + 2-oxoglutarate = 3-phosphooxypyruvate + L-glutamate. The catalysed reaction is 4-(phosphooxy)-L-threonine + 2-oxoglutarate = (R)-3-hydroxy-2-oxo-4-phosphooxybutanoate + L-glutamate. It functions in the pathway amino-acid biosynthesis; L-serine biosynthesis; L-serine from 3-phospho-D-glycerate: step 2/3. Functionally, catalyzes the reversible conversion of 3-phosphohydroxypyruvate to phosphoserine and of 3-hydroxy-2-oxo-4-phosphonooxybutanoate to phosphohydroxythreonine. In Streptococcus thermophilus (strain CNRZ 1066), this protein is Phosphoserine aminotransferase.